Reading from the N-terminus, the 327-residue chain is MSAGCDFVALYNGQKIPLIGLGTWKSEPGQVKEAVKYALSVGYRHVDCAAAYSNEAEIGDAFQECVGPNKVIKREDLFVTSKLWNTKHHPEDVEPALRKTLADLKLDYLDLYLMHWPHAFERGDNLFPKNPDGTMRYDYTDYKDTWKAMEKLVEKGLAKAIGLSNFNSRQIDDVLSVATVKPAVLQVECHPYLAQNELIAHCQKRGLVVTAYSPLGSPDRMWKHPDEPVLLEEPGIKKLAEKYKKSPAQILLRWQAQRKVVTIPKSVTPARILQNLQVFDFSLTEEEMSHVGSLNKNWRYIVPMLTVNGKPVPRDAGHPNYPFNDPY.

NADP(+) contacts are provided by residues 13 to 22 (GQKIPLIGLG), threonine 23, tryptophan 24, and aspartate 47. The active-site Proton donor is tyrosine 52. NADP(+)-binding residues include serine 164, asparagine 165, serine 213, leucine 215, serine 217, lysine 265, serine 266, valine 267, threonine 268, arginine 271, glutamine 274, and asparagine 275.

It belongs to the aldo/keto reductase family.

Its subcellular location is the cytoplasm. The protein resides in the cytosol. It is found in the apical cell membrane. It carries out the reaction a primary alcohol + NADP(+) = an aldehyde + NADPH + H(+). It catalyses the reaction S-nitroso-CoA + NADPH + H(+) = sulfinamide-CoA + NADP(+). The enzyme catalyses S-nitrosoglutathione + NADPH + H(+) = S-(hydroxysulfenamide)glutathione + NADP(+). Functionally, catalyzes the NADPH-dependent reduction of a wide variety of carbonyl-containing compounds to their corresponding alcohols. Displays enzymatic activity towards endogenous metabolites such as aromatic and aliphatic aldehydes, ketones, monosaccharides and bile acids. Acts as an aldehyde-detoxification enzyme. Also acts as an inhibitor of protein S-nitrosylation by mediating degradation of S-nitroso-coenzyme A (S-nitroso-CoA), a cofactor required to S-nitrosylate proteins. Also acts as a S-nitroso-glutathione reductase by catalyzing the NADPH-dependent reduction of S-nitrosoglutathione. Displays no reductase activity towards retinoids. This is Aldo-keto reductase family 1 member A1 (AKR1A1) from Gallus gallus (Chicken).